Consider the following 98-residue polypeptide: NADH-ubiquinone oxidoreductase chain 4L (98 aa).

The next 3 helical transmembrane spans lie at 1–21 (MSMV…GMLV), 29–49 (SLLC…VTIL), and 61–81 (IVLL…LVMV).

It belongs to the complex I subunit 4L family. Core subunit of respiratory chain NADH dehydrogenase (Complex I) which is composed of 45 different subunits.

The protein localises to the mitochondrion inner membrane. It carries out the reaction a ubiquinone + NADH + 5 H(+)(in) = a ubiquinol + NAD(+) + 4 H(+)(out). Its function is as follows. Core subunit of the mitochondrial membrane respiratory chain NADH dehydrogenase (Complex I) which catalyzes electron transfer from NADH through the respiratory chain, using ubiquinone as an electron acceptor. Part of the enzyme membrane arm which is embedded in the lipid bilayer and involved in proton translocation. The polypeptide is NADH-ubiquinone oxidoreductase chain 4L (MT-ND4L) (Canis latrans (Coyote)).